A 454-amino-acid chain; its full sequence is L-cysteine desulfhydrase-like protein lolT1 (454 aa).

Lys-227 bears the N6-(pyridoxal phosphate)lysine mark.

It belongs to the class-V pyridoxal-phosphate-dependent aminotransferase family. It depends on pyridoxal 5'-phosphate as a cofactor.

It functions in the pathway alkaloid biosynthesis. L-cysteine desulfhydrase-like protein; part of the gene cluster that mediates the biosynthesis of loline alkaloids, potent insecticidal agents composed of a pyrrolizidine ring system and an uncommon ether bridge linking carbons 2 and 7. Lolines are structurally differentiated by the various modifications of the L-amino group and include norloline, loline, N-methylloline, N-acetylloline, N-acetylnorloline, and N-formylloline. The first committed step is the condensation of O-acetyl-L-homoserine (derived from L-aspartic acid) and L-proline, probably catalyzed by the gamma-type pyridoxal 5'-phosphate(PLP)-dependent enzyme lolC, to give the diamino diacid, NACPP. Ensuing cyclization, decarboxylation, and acetylation steps yield 1-exo-acetamidopyrrolizidine (AcAP). LolO is required for installation of the ether bridge upon the pathway intermediate, 1-exo-acetamidopyrrolizidine (AcAP). In sequential 2-oxoglutarate- and O(2)-consuming steps, lolO removes hydrogens from C2 and C7 of AcAP to form both carbon-oxygen bonds in N-acetylnorloline (NANL), the precursor to all other lolines. The enzymes lolD, lolE, lolF and lolT have also been proposed to be involved in the ether-bridge installation. Further processing of the exocyclic moiety of NANL by fungal N-acetamidase (LolN), methyltransferase (LolM), and cytochrome P450 (LolP) enzymes, with occasional involvement of a plant acetyltransferase, generates the other known lolines. LolN transforms NANL to norlonine which is monomethylated and dimethylated to respectively lonine and N-methyllonine (NML) by lolM. LolP catalyzes hydroxylation of the methyl group in N-methylloline (NML) and further oxygenation to N-formylloline (NFL). A plant acetyltransferase is responsible for the acetylation of loline to form N-acetylloline (NAL). LolA might interact with aspartate kinase to prevent feedback inhibition of its activity by these end products and thereby promote production of L-homoserine from L-aspartate. This Epichloe uncinata (Endophyte fungus) protein is L-cysteine desulfhydrase-like protein lolT1.